We begin with the raw amino-acid sequence, 497 residues long: Protein FAM114A2 (497 aa).

The disordered stretch occupies residues 1–54; sequence MSDKDPPESPVVTGVASTLKDENCEPVEKPEDKSQPVVSTRKRPETKPSSDLEA. Residues 19 to 34 are compositionally biased toward basic and acidic residues; it reads LKDENCEPVEKPEDKS. A phosphoserine mark is found at serine 84 and serine 205. The segment at 344–364 is disordered; that stretch reads VAEKEEGEKESEAGNTEEAQK.

Belongs to the FAM114 family.

The chain is Protein FAM114A2 (Fam114a2) from Mus musculus (Mouse).